The sequence spans 496 residues: Genome polyprotein (496 aa).

The Extracellular segment spans residues 1–447 (SRCTHLENRD…HTVLGGAFNS (447 aa)). 6 disulfides stabilise this stretch: Cys3-Cys30, Cys60-Cys116, Cys60-Cys121, Cys74-Cys105, Cys92-Cys116, and Cys92-Cys121. Positions 98 to 111 (DRGWGNHCGLFGKG) are fusion peptide. Asn154 carries an N-linked (GlcNAc...) asparagine; by host glycan. 2 cysteine pairs are disulfide-bonded: Cys186/Cys290 and Cys307/Cys338. The chain crosses the membrane as a helical span at residues 448–468 (IFGGVGFLPKLLMGVALAWLG). Residues 469–479 (LNTRNPTMSMS) are Cytoplasmic-facing. Residues 480–496 (FLLAGGLVLAMTLGVGA) traverse the membrane as a helical segment.

As to quaternary structure, homodimer; in the endoplasmic reticulum and Golgi. In terms of processing, N-glycosylated.

Its subcellular location is the virion membrane. The protein resides in the host endoplasmic reticulum membrane. Its function is as follows. Binds to host cell surface receptor and mediates fusion between viral and cellular membranes. Envelope protein is synthesized in the endoplasmic reticulum in the form of heterodimer with protein prM. They play a role in virion budding in the ER, and the newly formed immature particle is covered with 60 spikes composed of heterodimer between precursor prM and envelope protein E. The virion is transported to the Golgi apparatus where the low pH causes dissociation of PrM-E heterodimers and formation of E homodimers. prM-E cleavage is ineficient, and many virions are only partially matured. These uncleaved prM would play a role in immune evasion. In Louping ill virus (strain Negishi 3248/49/P10) (Li), this protein is Genome polyprotein.